Reading from the N-terminus, the 64-residue chain is Conotoxin Pn-B01121 (64 aa).

The N-terminal stretch at 1–22 is a signal peptide; sequence MCCLPVFVILLLLIASAPSVDA. Residues 23–48 constitute a propeptide that is removed on maturation; the sequence is LPKTKDDMSLASFHDNAKRTLQILSN. Tryptophan 63 is subject to Tryptophan amide.

It belongs to the conotoxin T superfamily. In terms of processing, contains 2 disulfide bonds that can be either 'C1-C3, C2-C4' or 'C1-C4, C2-C3', since these disulfide connectivities have been observed for conotoxins with cysteine framework V (for examples, see AC P0DQQ7 and AC P81755). Expressed by the venom duct.

The protein localises to the secreted. In Conus pennaceus (Feathered cone), this protein is Conotoxin Pn-B01121.